A 589-amino-acid polypeptide reads, in one-letter code: Transmembrane 9 superfamily member 1 (589 aa).

The first 24 residues, 1–24 (MPSSSSAAVLVFLLLVSLLTPTFA), serve as a signal peptide directing secretion. At 25-222 (SDSDHKYQAE…YPFFEHQIHW (198 aa)) the chain is on the lumenal side. The helical transmembrane segment at 223-243 (FSIFNSFMMVIFLTGLVSMIL) threads the bilayer. Topologically, residues 244-293 (MRTLRNDYAKYAREDDDLESLERDVSEESGWKLVHGDVFRPASSLVLLSA) are cytoplasmic. Residues 294-314 (VVGTGAQLALLVLLVILMAIV) traverse the membrane as a helical segment. Residues 315 to 321 (GTLYVGR) lie on the Lumenal side of the membrane. A helical transmembrane segment spans residues 322-342 (GAIVTTFIVCYALTSFVSGYV). Topologically, residues 343–364 (SGGMYSRSGGKHWIKCMVLTAS) are cytoplasmic. Residues 365-385 (LFPFLCFGIGFLLNTIAIFYG) form a helical membrane-spanning segment. Over 386-395 (SLAAIPFGTM) the chain is Lumenal. Residues 396–416 (VVVFVIWGFISFPLALLGTVV) form a helical membrane-spanning segment. Over 417 to 448 (GRNWSGAPNNPCRVKTIPRPIPEKKWYLTPSV) the chain is Cytoplasmic. Residues 449 to 469 (VSLMGGLLPFGSIFIEMYFVF) traverse the membrane as a helical segment. The Lumenal portion of the chain corresponds to 470-481 (TSFWNYKVYYVY). The chain crosses the membrane as a helical span at residues 482–502 (GFMLLVFVILVIVTVCVTIVG). The Cytoplasmic segment spans residues 503–518 (TYFLLNAENYHWQWTS). The helical transmembrane segment at 519-539 (FFSAASTAVYVYLYSIYYYYV) threads the bilayer. Over 540–550 (KTKMSGFFQTS) the chain is Lumenal. The chain crosses the membrane as a helical span at residues 551-571 (FYFGYTMMFCLGLGILCGAVG). At 572–589 (YLGSNLFVRRIYRNIKCD) the chain is on the cytoplasmic side. The Endoplasmic reticulum export signal motif lies at 578-583 (FVRRIY). The Golgi retention signal motif lies at 587–589 (KCD).

Belongs to the nonaspanin (TM9SF) (TC 9.A.2) family. Ubiquitous.

The protein resides in the endosome membrane. Its subcellular location is the golgi apparatus membrane. This chain is Transmembrane 9 superfamily member 1, found in Arabidopsis thaliana (Mouse-ear cress).